The chain runs to 287 residues: MIRRRYRGCTQGAWIVSVGMLFASCTSGAWKASVDPLGVVGSGADVYLYFPVAGNENLISRIIENHESKADIKKIVDRTTAVYGAFFARSKEFRLFGSGSYPYAFTNLIFSRSDGWASTKTEHGITYYESEHTDVSIPAPHFSCVIFGSSKRERMSKMLSRLVNPDRPQLPPRFEKECTSEGTSQTVALYIKNGGHFITKLLNFPQLNLPLGAMELYLTARRNEYLYTLSLQLGNAKINFPIQFLISRVLNAHIHVEGDRLIIEDGTISAERLASVISSLYSKKGSS.

An N-terminal signal peptide occupies residues methionine 1 to serine 24. Residue cysteine 25 is the site of N-palmitoyl cysteine attachment. Cysteine 25 is lipidated: S-diacylglycerol cysteine. Amphipathic helix regions lie at residues proline 36 to valine 40, glutamate 56 to isoleucine 63, lysine 69 to aspartate 77, tyrosine 103 to arginine 112, methionine 155 to leucine 162, proline 172 to threonine 179, glycine 194 to leucine 202, phenylalanine 240 to leucine 250, and alanine 270 to serine 279.

In terms of assembly, a mix of monomer and dimers; may integrate into the membrane as a dimer. In terms of processing, palmitoylated upon expression of a fusion protein with first 46 residues fused to PhoA in E.coli.

It is found in the cell outer membrane. Might be involved in ligand transport, alters membrane permeability at acidic pH (4.0 to 5.5). Incubation of the non-lipidated form with lipid vesicles increases their permeability. This chain is Outer membrane protein TP0453, found in Treponema pallidum (strain Nichols).